Here is a 290-residue protein sequence, read N- to C-terminus: Flap endonuclease Xni (290 aa).

Residue aspartate 125 participates in Mg(2+) binding. The 5'-3' exonuclease domain occupies 181-275 (VKTSQLIDFW…DIRLTTSSSA (95 aa)). Leucine 192, valine 203, and isoleucine 206 together coordinate K(+). An interaction with DNA region spans residues 205-210 (GIGQVT).

The protein belongs to the Xni family. Requires Mg(2+) as cofactor. The cofactor is K(+).

In terms of biological role, has flap endonuclease activity. During DNA replication, flap endonucleases cleave the 5'-overhanging flap structure that is generated by displacement synthesis when DNA polymerase encounters the 5'-end of a downstream Okazaki fragment. This chain is Flap endonuclease Xni, found in Colwellia psychrerythraea (strain 34H / ATCC BAA-681) (Vibrio psychroerythus).